A 256-amino-acid polypeptide reads, in one-letter code: Lysine-rich coiled-coil protein 1 (256 aa).

Disordered regions lie at residues 61 to 83 and 141 to 256; these read QRIP…TEDR and GHST…ILGF. Polar residues-rich tracts occupy residues 64-79 and 141-153; these read PSGT…SSSQ and GHST…SHRQ. 2 stretches are compositionally biased toward basic and acidic residues: residues 161–188 and 218–227; these read HLEE…DLNK and KNRDVSSKKE. Residues 208–247 are a coiled coil; it reads TEKLKNRKEKKNRDVSSKKEDRKRRKEKKEQGEERTEEEM.

The sequence is that of Lysine-rich coiled-coil protein 1 (Krcc1) from Rattus norvegicus (Rat).